We begin with the raw amino-acid sequence, 704 residues long: Glycine--tRNA ligase beta subunit (704 aa).

This sequence belongs to the class-II aminoacyl-tRNA synthetase family. As to quaternary structure, tetramer of two alpha and two beta subunits.

Its subcellular location is the cytoplasm. The catalysed reaction is tRNA(Gly) + glycine + ATP = glycyl-tRNA(Gly) + AMP + diphosphate. This chain is Glycine--tRNA ligase beta subunit, found in Rhizobium etli (strain CIAT 652).